The sequence spans 156 residues: Transcriptional repressor NrdR (156 aa).

The segment at 3–34 (CPYCRHPDSRVVDSREAEEGAAIRRRRSCPNC) is a zinc-finger region. The 91-residue stretch at 46–136 (LSVVKRSGVT…VYRSFTSAED (91 aa)) folds into the ATP-cone domain.

Belongs to the NrdR family. Zn(2+) is required as a cofactor.

Functionally, negatively regulates transcription of bacterial ribonucleotide reductase nrd genes and operons by binding to NrdR-boxes. The sequence is that of Transcriptional repressor NrdR from Nocardia farcinica (strain IFM 10152).